Reading from the N-terminus, the 356-residue chain is Heme A synthase (356 aa).

The next 5 membrane-spanning stretches (helical) occupy residues 23 to 43 (IAIW…VGGV), 105 to 125 (FHRL…LYFL), 141 to 161 (IFLL…SGLV), 173 to 193 (AHLG…LDLL), and 212 to 232 (STML…VAGI). Histidine 274 lines the heme pocket. The next 3 membrane-spanning stretches (helical) occupy residues 276-296 (LIAW…RAVP), 307-327 (LLLI…LLVV), and 329-349 (LTLA…ALWV). Histidine 335 contacts heme.

The protein belongs to the COX15/CtaA family. Type 2 subfamily. As to quaternary structure, interacts with CtaB. Requires heme b as cofactor.

The protein resides in the cell membrane. It carries out the reaction Fe(II)-heme o + 2 A + H2O = Fe(II)-heme a + 2 AH2. It participates in porphyrin-containing compound metabolism; heme A biosynthesis; heme A from heme O: step 1/1. In terms of biological role, catalyzes the conversion of heme O to heme A by two successive hydroxylations of the methyl group at C8. The first hydroxylation forms heme I, the second hydroxylation results in an unstable dihydroxymethyl group, which spontaneously dehydrates, resulting in the formyl group of heme A. In Nitrosospira multiformis (strain ATCC 25196 / NCIMB 11849 / C 71), this protein is Heme A synthase.